Reading from the N-terminus, the 112-residue chain is uncharacterized protein (112 aa).

N-linked (GlcNAc...) asparagine; by host glycosylation is found at Asn29 and Asn60. Residues 66–86 (IFNGLGFILIVIFIYLLLITL) traverse the membrane as a helical segment.

It belongs to the asfivirus B117L family.

Its subcellular location is the host membrane. It is found in the virion. This is an uncharacterized protein from African swine fever virus (isolate Tick/South Africa/Pretoriuskop Pr4/1996) (ASFV).